The sequence spans 174 residues: Co-chaperone protein HscB (174 aa).

Positions 2 to 74 constitute a J domain; the sequence is DYFTLFGLPA…LKRAEYMLSL (73 aa).

This sequence belongs to the HscB family. As to quaternary structure, interacts with HscA and stimulates its ATPase activity. Interacts with IscU.

Functionally, co-chaperone involved in the maturation of iron-sulfur cluster-containing proteins. Seems to help targeting proteins to be folded toward HscA. The protein is Co-chaperone protein HscB of Yersinia pestis bv. Antiqua (strain Antiqua).